The primary structure comprises 321 residues: Torsin-2A (321 aa).

Positions 1-26 (MAAATRSCRPWGSLLGLIWLVSAAAA) are cleaved as a signal peptide. 93–100 (GWTGTGKS) is an ATP binding site. Asn-149 carries an N-linked (GlcNAc...) asparagine glycan.

This sequence belongs to the ClpA/ClpB family. Torsin subfamily. In terms of assembly, homohexamer. Interacts with TOR1AIP1.

It is found in the endoplasmic reticulum lumen. This chain is Torsin-2A (TOR2A), found in Bos taurus (Bovine).